Consider the following 162-residue polypeptide: UPF0178 protein RSKD131_2223 (162 aa).

The protein belongs to the UPF0178 family.

The protein is UPF0178 protein RSKD131_2223 of Cereibacter sphaeroides (strain KD131 / KCTC 12085) (Rhodobacter sphaeroides).